A 422-amino-acid polypeptide reads, in one-letter code: UPF0761 membrane protein Paes_1471 (422 aa).

6 helical membrane passes run 47–67, 103–123, 143–163, 185–205, 208–228, and 247–267; these read LLSI…SPVF, SVPT…ISTI, FTLY…SLVA, LLLL…ILVP, KVKF…FEFS, and GALS…VVAL.

The protein belongs to the UPF0761 family.

The protein localises to the cell inner membrane. This is UPF0761 membrane protein Paes_1471 from Prosthecochloris aestuarii (strain DSM 271 / SK 413).